The chain runs to 250 residues: Small ribosomal subunit protein uS3 (250 aa).

In terms of domain architecture, KH type-2 spans 39 to 109 (IRNYVQARLK…EVKIDVVEVI (71 aa)). Positions 225–239 (INERRGDSKSRPRDP) are enriched in basic and acidic residues. The disordered stretch occupies residues 225–250 (INERRGDSKSRPRDPRNKRRRRTKRS). A compositionally biased stretch (basic residues) spans 240–250 (RNKRRRRTKRS).

This sequence belongs to the universal ribosomal protein uS3 family. As to quaternary structure, part of the 30S ribosomal subunit. Forms a tight complex with proteins S10 and S14.

Its function is as follows. Binds the lower part of the 30S subunit head. Binds mRNA in the 70S ribosome, positioning it for translation. The sequence is that of Small ribosomal subunit protein uS3 from Chlorobium phaeobacteroides (strain DSM 266 / SMG 266 / 2430).